The following is a 146-amino-acid chain: Ferredoxin-thioredoxin reductase catalytic chain, chloroplastic (146 aa).

A chloroplast-targeting transit peptide spans 1–31 (MNLQAVSCSFGFLSSPLGVTPRTSFRRFVIR). Residue Cys85 coordinates [4Fe-4S] cluster. The Nucleophile role is filled by Cys87. Cys87 and Cys117 are disulfide-bonded. Positions 104, 106, and 115 each coordinate [4Fe-4S] cluster.

The protein belongs to the ferredoxin thioredoxin reductase beta subunit family. Heterodimer of subunit A (variable subunit) and subunit B (catalytic subunit). Heterodimeric FTR forms a complex with ferredoxin and thioredoxin. [4Fe-4S] cluster serves as cofactor.

It localises to the plastid. The protein localises to the chloroplast. It catalyses the reaction [thioredoxin]-disulfide + 2 reduced [2Fe-2S]-[ferredoxin] + 2 H(+) = [thioredoxin]-dithiol + 2 oxidized [2Fe-2S]-[ferredoxin]. Its function is as follows. Catalytic subunit of the ferredoxin-thioredoxin reductase (FTR), which catalyzes the two-electron reduction of thioredoxins by the electrons provided by reduced ferredoxin. The polypeptide is Ferredoxin-thioredoxin reductase catalytic chain, chloroplastic (Arabidopsis thaliana (Mouse-ear cress)).